Reading from the N-terminus, the 140-residue chain is 3-hydroxyacyl-[acyl-carrier-protein] dehydratase FabZ (140 aa).

His-48 is an active-site residue.

This sequence belongs to the thioester dehydratase family. FabZ subfamily.

The protein localises to the cytoplasm. It carries out the reaction a (3R)-hydroxyacyl-[ACP] = a (2E)-enoyl-[ACP] + H2O. Involved in unsaturated fatty acids biosynthesis. Catalyzes the dehydration of short chain beta-hydroxyacyl-ACPs and long chain saturated and unsaturated beta-hydroxyacyl-ACPs. This Latilactobacillus sakei subsp. sakei (strain 23K) (Lactobacillus sakei subsp. sakei) protein is 3-hydroxyacyl-[acyl-carrier-protein] dehydratase FabZ.